We begin with the raw amino-acid sequence, 607 residues long: Matrix metalloproteinase-16 (607 aa).

Residues 1–31 form the signal peptide; that stretch reads MILLTFSTGRRLDFVHHSGVFFLQTLLWILC. Residues 32 to 119 constitute a propeptide that is removed on maturation; that stretch reads ATVCGTEQYF…SSKFHIRRKR (88 aa). N83 carries an N-linked (GlcNAc...) asparagine glycan. Residues 99–106 carry the Cysteine switch motif; the sequence is PRCGVPDQ. C101 is a binding site for Zn(2+). The Extracellular segment spans residues 120 to 564; sequence YALTGQKWQH…LDNTASTVKA (445 aa). D183 is a Ca(2+) binding site. Positions 193 and 195 each coordinate Zn(2+). The Ca(2+) site is built by D200, G201, G203, and F205. H208 contributes to the Zn(2+) binding site. Positions 215, 217, and 219 each coordinate Ca(2+). Position 221 (H221) interacts with Zn(2+). Ca(2+) contacts are provided by D223 and E226. Position 246 (H246) interacts with Zn(2+). The active site involves E247. Positions 250 and 256 each coordinate Zn(2+). The segment at 281–340 is disordered; that stretch reads DDLQGIQKIYGPPDKIPPPTRPLPTVPPHRSIPPADPRKNDRPKPPRPPTGRPSYPGAKP. Positions 294 to 315 are enriched in pro residues; sequence DKIPPPTRPLPTVPPHRSIPPA. Hemopexin repeat units lie at residues 340 to 388, 389 to 434, 436 to 484, and 485 to 532; these read PNIC…WRGL, PPSI…GSGI, PHGI…KGIP, and ESPQ…FMGC. An intrachain disulfide couples C343 to C532. A helical membrane pass occupies residues 565-585; it reads IAIVIPCILALCLLVLVYTVF. The Cytoplasmic segment spans residues 586 to 607; that stretch reads QFKRKGTPRHILYCKRSMQEWV.

It belongs to the peptidase M10A family. As to quaternary structure, interacts with CSPG4 through CSPG4 chondroitin sulfate glycosaminoglycan. The cofactor is Zn(2+). Ca(2+) is required as a cofactor. The precursor is cleaved by a furin endopeptidase. Expressed in heart, brain, placenta, ovary and small intestine. Isoform Short is found in the ovary.

The protein localises to the cell membrane. It is found in the secreted. Its subcellular location is the extracellular space. It localises to the extracellular matrix. The protein resides in the cell surface. TIMP-2 shows little inhibitory activity compared to TIMP-1. TIMP-1 seems to have less binding affinity than TIMP-2 for the short isoform. In terms of biological role, endopeptidase that degrades various components of the extracellular matrix, such as collagen type III and fibronectin. Activates progelatinase A. Involved in the matrix remodeling of blood vessels. Isoform short cleaves fibronectin and also collagen type III, but at lower rate. It has no effect on type I, II, IV and V collagen. However, upon interaction with CSPG4, it may be involved in degradation and invasion of type I collagen by melanoma cells. This chain is Matrix metalloproteinase-16, found in Homo sapiens (Human).